Reading from the N-terminus, the 433-residue chain is Adenylosuccinate synthetase (433 aa).

GTP contacts are provided by residues 11–17 and 39–41; these read GDEGKGK and GHT. Asp-12 (proton acceptor) is an active-site residue. Mg(2+) contacts are provided by Asp-12 and Gly-39. Residues 12-15, 37-40, Thr-134, Arg-148, Asn-230, Thr-245, and Arg-309 contribute to the IMP site; these read DEGK and NAGH. His-40 acts as the Proton donor in catalysis. A substrate-binding site is contributed by 305 to 311; that stretch reads VTTGRKR. GTP is bound by residues Arg-311, 337–339, and 419–421; these read KLD and GTG.

It belongs to the adenylosuccinate synthetase family. In terms of assembly, homodimer. Requires Mg(2+) as cofactor.

Its subcellular location is the cytoplasm. It carries out the reaction IMP + L-aspartate + GTP = N(6)-(1,2-dicarboxyethyl)-AMP + GDP + phosphate + 2 H(+). The protein operates within purine metabolism; AMP biosynthesis via de novo pathway; AMP from IMP: step 1/2. Functionally, plays an important role in the de novo pathway and in the salvage pathway of purine nucleotide biosynthesis. Catalyzes the first committed step in the biosynthesis of AMP from IMP. In Eremothecium gossypii (strain ATCC 10895 / CBS 109.51 / FGSC 9923 / NRRL Y-1056) (Yeast), this protein is Adenylosuccinate synthetase.